Here is a 410-residue protein sequence, read N- to C-terminus: LanC-like protein GCR2 (410 aa).

Zn(2+) is bound by residues Cys283, Cys328, and His329.

It belongs to the LanC-like protein family. As to quaternary structure, may interact (via C-terminus) with GPA1.

Functionally, may play a role in abscisic acid (ABA) signaling. The sequence is that of LanC-like protein GCR2 (GCR2) from Arabidopsis thaliana (Mouse-ear cress).